A 141-amino-acid polypeptide reads, in one-letter code: Large ribosomal subunit protein uL11 (141 aa).

Belongs to the universal ribosomal protein uL11 family. Part of the ribosomal stalk of the 50S ribosomal subunit. Interacts with L10 and the large rRNA to form the base of the stalk. L10 forms an elongated spine to which L12 dimers bind in a sequential fashion forming a multimeric L10(L12)X complex. In terms of processing, one or more lysine residues are methylated.

Functionally, forms part of the ribosomal stalk which helps the ribosome interact with GTP-bound translation factors. The protein is Large ribosomal subunit protein uL11 of Geobacillus kaustophilus (strain HTA426).